Reading from the N-terminus, the 382-residue chain is F-box/kelch-repeat protein KIB1 (382 aa).

Positions 22–69 (SKHSILAVDLVRLILERLSFVDFHRARCVSSIWYIASKTVIGVTNPTT) constitute an F-box domain. Kelch repeat units follow at residues 73–117 (ILFP…ASSG), 159–209 (VLWV…FKEN), and 259–306 (IVAK…ITVE).

In terms of assembly, part of a SCF (SKP1-cullin-F-box) protein ligase complex. Binds directly to several GSK3 family proteins such as SKP1A/ASK1, ASK1/SK11, ASK3/SK12, ASK5/SK13, ASK7/BIN2/SK21, ASK9/SK22 and ASK6/SK23. Interacts with ASK7/BIN2/SK21 in a brassinosteroid (BR)-dependent manner. As to expression, expressed in seedlings, leaves, stems, flower buds and flowers.

It localises to the cytoplasm. The protein resides in the nucleus. Its subcellular location is the nucleolus. Its function is as follows. Component of SCF(ASK-cullin-F-box) E3 ubiquitin ligase complexes, which may mediate the ubiquitination and subsequent proteasomal degradation of target proteins. Required for brassinosteroid (BR) signal transduction. Mediates ASK7/BIN2/SK21 inactivation both by competing with substrate binding (e.g. BZR1) and by promoting its ubiquitination and subsequent proteasomal degradation. In Arabidopsis thaliana (Mouse-ear cress), this protein is F-box/kelch-repeat protein KIB1.